The chain runs to 604 residues: MAVSAQLLVEELQIFGLECEEAVIEKLVELCILYGQNEEGMASELIAFCTSTRKDCFTLETLNSFEHEFLSKRVSKTRHGASKDKGLRHAGARDIVSIQELIEVEEEEETLLNSYTTPSKGSQKRTITTPETPLTKRSVSARSPHQLLSPSSFSPSATPPQKYSSRSNRGEVVTSFGSAQGVSWSGRGGASPLSLKVLGHPEPLTGSYKYMFQKLPDIREVLTCKIEELGSELKEHYKIEAFAPILVPAQEPVTLLGQIGCDSNGKLNHKSVILEGDLEHSSGAQIPVDLSELKEYSLFPGQVVVMEGINTTGRKLVATRLYEGVPLPFHQPDEEDGDSEQFMVLVACGPYTTSDSITFDPLLDLITIINRDRPDVCILFGPFLDAKHEQVESCLLTSSFEDVFKQCLRTIIEGTRSSGSHLIIVPSLRDVHHEPVYPQPPFSCSDLLREDKKRVRLVSEPCTLSINGVIFGLTSTDLLFHMGAEEISSSSGTSDRFSRILRHILTQRSYYPLYPPQEDMAIDYENFYLYAQLPVTPDVFIAPSELRYFVKVGLNSAISLQCQNQFLSGALALNSSRVCWWGQWPRSFGGGVGVENKSVSIMLK.

The segment at 109–171 (ETLLNSYTTP…KYSSRSNRGE (63 aa)) is disordered. The segment covering 113–141 (NSYTTPSKGSQKRTITTPETPLTKRSVSA) has biased composition (polar residues). Threonine 129 and threonine 132 each carry phosphothreonine. Phosphoserine occurs at positions 143, 149, 154, and 156. The segment covering 143-160 (SPHQLLSPSSFSPSATPP) has biased composition (low complexity).

The protein belongs to the DNA polymerase alpha subunit B family. In terms of assembly, component of the alpha DNA polymerase complex (also known as the alpha DNA polymerase-primase complex) consisting of four subunits: the catalytic subunit POLA1, the regulatory subunit POLA2, and the primase complex subunits PRIM1 and PRIM2 respectively. Within the complex, POLA1 directly interacts with PRIM2. Post-translationally, phosphorylated in a cell cycle-dependent manner, in G2/M phase.

The protein resides in the nucleus. In terms of biological role, accessory subunit of the DNA polymerase alpha complex (also known as the alpha DNA polymerase-primase complex) which plays an essential role in the initiation of DNA synthesis. During the S phase of the cell cycle, the DNA polymerase alpha complex (composed of a catalytic subunit POLA1, an accessory subunit POLA2 and two primase subunits, the catalytic subunit PRIM1 and the regulatory subunit PRIM2) is recruited to DNA at the replicative forks via direct interactions with MCM10 and WDHD1. The primase subunit of the polymerase alpha complex initiates DNA synthesis by oligomerising short RNA primers on both leading and lagging strands. These primers are initially extended by the polymerase alpha catalytic subunit and subsequently transferred to polymerase delta and polymerase epsilon for processive synthesis on the lagging and leading strand, respectively. The chain is DNA polymerase alpha subunit B (POLA2) from Bos taurus (Bovine).